The following is a 581-amino-acid chain: Multidrug and toxin extrusion protein 2 (581 aa).

At 1-33 the chain is on the cytoplasmic side; sequence MDSLQDTVPLDHGGCCPALSRLVPRGFGTEMWT. Residues 34–54 traverse the membrane as a helical segment; the sequence is LFALSGPLFLFQVLTFMIYIV. At 55-66 the chain is on the extracellular side; that stretch reads STVFCGHLGKVE. The helical transmembrane segment at 67-87 threads the bilayer; that stretch reads LASVTLAVAFVNVCGVSVGVG. The Cytoplasmic segment spans residues 88 to 119; that stretch reads LSSACDTLMSQSFGSPNKKHVGVILQRGALVL. The helical transmembrane segment at 120–140 threads the bilayer; that stretch reads LLCCLPCWALFLNTQHILLLF. Residues 141–153 are Extracellular-facing; it reads RQDPEVSRLTQDY. Residues 154 to 174 traverse the membrane as a helical segment; that stretch reads VMIFIPGLPVIFLYNLLAKYL. The Cytoplasmic portion of the chain corresponds to 175 to 183; it reads QNQKITWPQ. A helical membrane pass occupies residues 184 to 204; the sequence is VLSGVVGNCVNGVANYALVSV. Over 205-212 the chain is Extracellular; that stretch reads LNLGVRGS. A helical transmembrane segment spans residues 213-233; sequence AYANIISQFAQTVFLLLYIVL. Residues 234-253 lie on the Cytoplasmic side of the membrane; the sequence is KKLHLETWAGWSSQCLQDWG. Residues 254–273 form a helical membrane-spanning segment; that stretch reads PFFSLAVPSMLMICVEWWAY. Over 274–317 the chain is Extracellular; that stretch reads EIGSFLMGLLSVVDLSAQAVIYEVATVTYMRHSHHLAYTAHVAR. Residues 318–338 traverse the membrane as a helical segment; sequence IPLGLSIGVCVRVGMALGAAD. Residues 339–346 are Cytoplasmic-facing; it reads TVQAKRSA. The chain crosses the membrane as a helical span at residues 347–367; that stretch reads VSGVLSIVGISLVLGTLISIL. Residues 368 to 380 are Extracellular-facing; the sequence is KNQLGHIFTNDED. A helical membrane pass occupies residues 381–401; sequence VIALVSQVLPVYSVFHVFEAI. Residues 402–420 lie on the Cytoplasmic side of the membrane; sequence CCVYGGVLRGTGKQAFGAA. The helical transmembrane segment at 421 to 441 threads the bilayer; sequence VNAITYYIIGLPLGILLTFVV. The Extracellular portion of the chain corresponds to 442 to 444; it reads RMR. The chain crosses the membrane as a helical span at residues 445 to 465; the sequence is IMGLWLGMLACVFLATAAFVA. Residues 466-557 are Cytoplasmic-facing; that stretch reads YTARLDWKLA…LSVKQLVIRR (92 aa). The segment at 481–513 is disordered; that stretch reads KHSGQQQQQQRAESTATRSGPEKAVLSSVATGS. The chain crosses the membrane as a helical span at residues 558–578; it reads GAALGAASATLMVGLTVRILA. The Extracellular portion of the chain corresponds to 579–581; it reads TRH.

The protein belongs to the multi antimicrobial extrusion (MATE) (TC 2.A.66.1) family.

It is found in the cell membrane. The protein resides in the apical cell membrane. The catalysed reaction is thiamine(out) + H(+)(in) = thiamine(in) + H(+)(out). The enzyme catalyses estrone 3-sulfate(in) + H(+)(out) = estrone 3-sulfate(out) + H(+)(in). It catalyses the reaction creatinine(in) + H(+)(out) = creatinine(out) + H(+)(in). In terms of biological role, multidrug efflux pump that functions as a H(+)/organic cation antiporter. Mediates the efflux of cationic compounds, such as the model cations, tetraethylammonium (TEA) and 1-methyl-4-phenylpyridinium (MPP+), the platinum-based drug oxaliplatin or weak bases that are positively charged at physiological pH, cimetidine or the antidiabetic drug metformin. Mediates the efflux of the endogenous compounds creatinine, thiamine and estrone-3-sulfate. Plays a physiological role in the excretion of drugs, toxins and endogenous metabolites through the kidney. This is Multidrug and toxin extrusion protein 2 (SLC47A2) from Pongo abelii (Sumatran orangutan).